The following is a 331-amino-acid chain: Putative NAD(P)H nitroreductase acg (331 aa).

Residues 28–32 and Arg316 each bind FMN; that span reads QPWRW.

Belongs to the nitroreductase family. It depends on FMN as a cofactor.

This chain is Putative NAD(P)H nitroreductase acg (acg), found in Mycobacterium tuberculosis (strain CDC 1551 / Oshkosh).